Here is a 348-residue protein sequence, read N- to C-terminus: NADH-quinone oxidoreductase subunit H 1 (348 aa).

8 consecutive transmembrane segments (helical) span residues 11-31, 83-103, 136-156, 172-192, 208-228, 268-288, 289-309, and 324-344; these read IYYI…LLTV, FAFL…FAVI, VGVL…VLAG, SAQM…VFML, GAWY…CSLA, MVTV…GPAF, LPGW…CMWI, and LGWK…GIVV.

It belongs to the complex I subunit 1 family. NDH-1 is composed of 14 different subunits. Subunits NuoA, H, J, K, L, M, N constitute the membrane sector of the complex.

The protein resides in the cell inner membrane. It catalyses the reaction a quinone + NADH + 5 H(+)(in) = a quinol + NAD(+) + 4 H(+)(out). In terms of biological role, NDH-1 shuttles electrons from NADH, via FMN and iron-sulfur (Fe-S) centers, to quinones in the respiratory chain. The immediate electron acceptor for the enzyme in this species is believed to be ubiquinone. Couples the redox reaction to proton translocation (for every two electrons transferred, four hydrogen ions are translocated across the cytoplasmic membrane), and thus conserves the redox energy in a proton gradient. This subunit may bind ubiquinone. The chain is NADH-quinone oxidoreductase subunit H 1 from Geobacter sulfurreducens (strain ATCC 51573 / DSM 12127 / PCA).